The chain runs to 897 residues: Putative POM121-like protein 1-like (897 aa).

The segment covering Met-1 to Thr-19 has biased composition (basic and acidic residues). Disordered stretches follow at residues Met-1 to Pro-177, Ile-211 to Gln-252, Glu-266 to Ala-302, Ala-315 to Leu-348, Ala-362 to Pro-469, Asp-484 to Ser-522, Ala-536 to Ser-612, Ala-642 to Pro-741, Ala-753 to Lys-793, and Ser-812 to Thr-856. Residues Leu-54–His-65 show a composition bias toward polar residues. Low complexity predominate over residues Thr-66–Thr-76. 3 stretches are compositionally biased toward polar residues: residues Lys-77 to Gly-89, Ser-103 to Thr-114, and Pro-219 to Thr-228. 4 stretches are compositionally biased toward polar residues: residues Asn-376–Arg-385, Ser-417–Ser-430, Pro-490–Thr-499, and Phe-556–Ile-579. Residues Thr-599–Ser-612 show a composition bias toward low complexity. Composition is skewed to polar residues over residues Asn-650 to Gly-676, Ser-689 to Ser-702, Pro-762 to Thr-771, and Phe-828 to Ser-849. Residues Leu-877–Phe-897 form a helical membrane-spanning segment.

Belongs to the POM121 family.

The protein localises to the membrane. This Homo sapiens (Human) protein is Putative POM121-like protein 1-like.